The following is a 226-amino-acid chain: Ribonuclease 3 (226 aa).

An RNase III domain is found at 6–128; it reads MKKLQKFIGY…IIASIFLDSN (123 aa). Position 41 (glutamate 41) interacts with Mg(2+). Residue aspartate 45 is part of the active site. Mg(2+) is bound by residues asparagine 114 and glutamate 117. Glutamate 117 is a catalytic residue. The 71-residue stretch at 155–225 folds into the DRBM domain; the sequence is DPKTRLQEYL…AQNALIRLEV (71 aa).

The protein belongs to the ribonuclease III family. As to quaternary structure, homodimer. Mg(2+) serves as cofactor.

The protein localises to the cytoplasm. The catalysed reaction is Endonucleolytic cleavage to 5'-phosphomonoester.. Functionally, digests double-stranded RNA. Involved in the processing of primary rRNA transcript to yield the immediate precursors to the large and small rRNAs (23S and 16S). Processes some mRNAs, and tRNAs when they are encoded in the rRNA operon. Processes pre-crRNA and tracrRNA of type II CRISPR loci if present in the organism. The chain is Ribonuclease 3 from Buchnera aphidicola subsp. Cinara cedri (strain Cc).